The following is a 730-amino-acid chain: PWWP domain-containing protein 2A (730 aa).

The segment covering 1–15 (MAAVAAEAAATAASP) has biased composition (low complexity). Residues 1-134 (MAAVAAEAAA…PPAGGDSAVS (134 aa)) are disordered. The span at 66-77 (PLPPPPPPPPPG) shows a compositional bias: pro residues. S82 and S99 each carry phosphoserine. Pro residues predominate over residues 91 to 108 (PEPAAVPVSPPEQPPAAP). The tract at residues 128 to 346 (GGDSAVSHLI…KLKTDHKVDG (219 aa)) is interaction with HDAC1 and MTA1. K188 is covalently cross-linked (Glycyl lysine isopeptide (Lys-Gly) (interchain with G-Cter in SUMO2)). Disordered stretches follow at residues 257-276 (YNQS…KRKM), 311-355 (IRKG…SQRR), and 409-531 (KEKA…LGKK). Residues 267 to 276 (RKIKRPKRKM) are compositionally biased toward basic residues. Basic and acidic residues-rich tracts occupy residues 311–329 (IRKG…RRND) and 341–354 (DHKV…ESQR). The interaction with the H2A.Z/H2AZ1 stretch occupies residues 396–547 (MDHAKAREVL…SVYLTLNQET (152 aa)). Low complexity predominate over residues 488 to 501 (SAGEAPSEKPSPSE). Basic and acidic residues predominate over residues 512–527 (DTSRVRVPGEQEELRM). In terms of domain architecture, PWWP spans 630 to 690 (VGDIVWAKIY…LSQLSPFLEN (61 aa)).

In terms of assembly, component of a MTA1-specific subcomplex of the NuRD complex (M1HR), which is composed of PWWP2A, MTA1/2, HDAC1/2, and RBBP4/7 but does not contain CHD4 and MBD3. Interacts with MTA1; the interaction mediates the association of PWWP2A with the M1HR complex. Interacts with H2A.Z/H2AZ1. Interacts (via PWWP domain) with histone H3 trimethylated at 'Lys-36' (H3K36me3). Does not interact with CHD4 and MBD3.

It is found in the nucleus. Chromatin-binding protein that acts as an adapter between distinct nucleosome components (H3K36me3 or H2A.Z) and chromatin-modifying complexes, contributing to the regulation of the levels of histone acetylation at actively transcribed genes. Competes with CHD4 and MBD3 for interaction with MTA1 to form a NuRD subcomplex, preventing the formation of full NuRD complex (containing CHD4 and MBD3), leading to recruitment of HDACs to gene promoters resulting in turn in the deacetylation of nearby H3K27 and H2A.Z. Plays a role in facilitating transcriptional elongation and repression of spurious transcription initiation through regulation of histone acetylation. Essential for proper mitosis progression. The polypeptide is PWWP domain-containing protein 2A (Pwwp2a) (Mus musculus (Mouse)).